A 208-amino-acid chain; its full sequence is LysM and putative peptidoglycan-binding domain-containing protein 2 (208 aa).

Residues 1–54 are disordered; sequence MAEFSPVLPPLRDDGGGGRYGQPLFPRSRSGSESDSELSQSLARTKTRSYGSTA. A compositionally biased stretch (low complexity) spans 27–42; sequence RSRSGSESDSELSQSL. The LysM domain maps to 65-109; sequence IEHRVTDGETLQGIALKYGVTMEQIKRVNKLFSNDCIFLRNTLSI. 2 disordered regions span residues 122 to 169 and 187 to 208; these read LSLE…EELS and AARK…YQEI. The segment covering 129-140 has biased composition (polar residues); it reads SEGNTPQESPCV. The segment covering 147 to 156 has biased composition (pro residues); sequence PSPPPEPSVP.

This chain is LysM and putative peptidoglycan-binding domain-containing protein 2 (lysmd2), found in Danio rerio (Zebrafish).